A 508-amino-acid polypeptide reads, in one-letter code: Cytochrome P450 monooxygenase BipB (508 aa).

The helical transmembrane segment at 11–31 (ELAWLLLGPLVLFYVFKLFIY) threads the bilayer. Cys448 is a heme binding site.

The protein belongs to the cytochrome P450 family. Heme is required as a cofactor.

It localises to the membrane. It functions in the pathway sesquiterpene biosynthesis. Cytochrome P450 monooxygenase; part of the minimal biosynthetic bip cluster that mediates the biosynthesis of bridged polycyclic sesquiterpenoids derived from sativene, isosativene, and longifolene. The sesquiterpene cyclase BipA acts as a versatile cyclase that converts farnesyl diphosphate (FPP) into (-)-sativene as the dominant product and (-)-isosativene and (-)-longifolene as minor ones. The cytochrome P450 monooxygenase BipB then hydroxylates different enantiomeric sesquiterpenes, such as (-)-longifolene and (+)-longifolene, at C-15 and C-14. The C-15- or both C-15- and C-14-hydroxylated products are further oxidized by unclustered oxidases, resulting in a structurally diverse array of sesquiterpenoids. The BipB-catalyzed hydroxylation at C-15 serves as an initiator for the oxidation by the unclustered oxidases. The protein is Cytochrome P450 monooxygenase BipB of Cochliobolus sativus (Common root rot and spot blotch fungus).